A 706-amino-acid chain; its full sequence is Cyclic nucleotide-gated channel alpha-3 (706 aa).

Topologically, residues 1–189 (MAKISTQYSH…MDPSSNMYYH (189 aa)) are cytoplasmic. The interval 113–177 (RESHVQFNVG…PKKEEKKKDS (65 aa)) is disordered. The span at 147-177 (SEKDDKAKKEEKEKKEEKKENPKKEEKKKDS) shows a compositional bias: basic and acidic residues. The chain crosses the membrane as a helical span at residues 190-211 (WLTVIAVPVFYNWCLLVCRACF). Residues 212-217 (DELQSE) are Extracellular-facing. A helical transmembrane segment spans residues 218-238 (HLMLWLVLDYSADILYGMDML). At 239 to 265 (VRARTGFLEQGLMVMDASRLWKHYTQT) the chain is on the cytoplasmic side. The chain crosses the membrane as a helical span at residues 266-285 (LHFKLDVLSLVPTDLAYFKL). Over 286–289 (GMNY) the chain is Extracellular. The helical transmembrane segment at 290–307 (PELRFNRLLKLARLFEFF) threads the bilayer. Topologically, residues 308 to 317 (DRTETRTNYP) are cytoplasmic. Residues 317–425 (PNMFRIGNLV…GNVGSMISNM (109 aa)) form an ion conduction pathway region. A helical membrane pass occupies residues 318–340 (NMFRIGNLVLYILIIIHWNACIY). Residues 341–366 (FAISKFIGFGTDSWVYPNVSNPEYGR) lie on the Extracellular side of the membrane. Asparagine 358 carries an N-linked (GalNAc...) asparagine glycan. A run of 2 helical transmembrane segments spans residues 367 to 397 (LSRK…DEEY) and 398 to 422 (LFVV…GSMI). Residues 384–387 (TIGE) are selectivity filter. Topologically, residues 423–706 (SNMNASRAEF…DAPQTEASQP (284 aa)) are cytoplasmic. Residues 427–504 (ASRAEFQAKI…TLRKVRIFQD (78 aa)) form a C-linker region. Residues 507-627 (AGLLVELVLK…EEKGRQILMK (121 aa)) are cyclic nucleotide-binding domain. Positions 567, 568, 570, 583, 584, and 628 each coordinate 3',5'-cyclic GMP. Positions 645–688 (IEEKVEHLETSLDSLQTRFARLLAEYNATQMKVKQRLSQLESQV) form a coiled coil. The tract at residues 685 to 706 (ESQVKMGLPPDGDAPQTEASQP) is disordered.

The protein belongs to the cyclic nucleotide-gated cation channel (TC 1.A.1.5) family. CNGA3 subfamily. Forms heterotetrameric channels composed of CNGA3 and CNGB3 subunits with 3:1 stoichiometry. In terms of tissue distribution, testis, kidney, retinal cone (at protein level) and heart.

Its subcellular location is the cell membrane. It catalyses the reaction Ca(2+)(in) = Ca(2+)(out). The enzyme catalyses Na(+)(in) = Na(+)(out). It carries out the reaction K(+)(in) = K(+)(out). The catalysed reaction is NH4(+)(in) = NH4(+)(out). It catalyses the reaction Rb(+)(in) = Rb(+)(out). The enzyme catalyses Li(+)(in) = Li(+)(out). It carries out the reaction Cs(+)(in) = Cs(+)(out). Its activity is regulated as follows. Ca(2+) influx is inhibited by extracellular Mg(2+) ions. In terms of biological role, pore-forming subunit of the cone cyclic nucleotide-gated channel. Mediates cone photoresponses at bright light converting transient changes in intracellular cGMP levels into electrical signals. In the dark, cGMP levels are high and keep the channel open enabling a steady inward current carried by Na(+) and Ca(2+) ions that leads to membrane depolarization and neurotransmitter release from synaptic terminals. Upon photon absorption cGMP levels decline leading to channel closure and membrane hyperpolarization that ultimately slows neurotransmitter release and signals the presence of light, the end point of the phototransduction cascade. Pore-forming subunit of the gustatory cyclic nucleotide-gated channel. In the taste buds, may sense oral extracellular pH and conduct ion currents that modulate the excitability of taste cells. Conducts cGMP- and cAMP-gated ion currents, with permeability for monovalent and divalent cations. This Bos taurus (Bovine) protein is Cyclic nucleotide-gated channel alpha-3.